The chain runs to 178 residues: Meiotically up-regulated gene 95 protein (178 aa).

Residues 1–12 are Cytoplasmic-facing; the sequence is MNLFVYIAQNPT. A helical; Signal-anchor for type II membrane protein transmembrane segment spans residues 13–30; that stretch reads LTKWFFCCVCTILTMPFF. Topologically, residues 31 to 178 are lumenal; the sequence is KKPYRKRGIS…ESIEKPENDN (148 aa).

Its subcellular location is the endoplasmic reticulum membrane. In terms of biological role, has a role in meiosis. This is Meiotically up-regulated gene 95 protein (mug95) from Schizosaccharomyces pombe (strain 972 / ATCC 24843) (Fission yeast).